Consider the following 556-residue polypeptide: 2-succinyl-5-enolpyruvyl-6-hydroxy-3-cyclohexene-1-carboxylate synthase (556 aa).

This sequence belongs to the TPP enzyme family. MenD subfamily. As to quaternary structure, homodimer. Mg(2+) is required as a cofactor. It depends on Mn(2+) as a cofactor. The cofactor is thiamine diphosphate.

It carries out the reaction isochorismate + 2-oxoglutarate + H(+) = 5-enolpyruvoyl-6-hydroxy-2-succinyl-cyclohex-3-ene-1-carboxylate + CO2. It functions in the pathway quinol/quinone metabolism; 1,4-dihydroxy-2-naphthoate biosynthesis; 1,4-dihydroxy-2-naphthoate from chorismate: step 2/7. Its pathway is quinol/quinone metabolism; menaquinone biosynthesis. In terms of biological role, catalyzes the thiamine diphosphate-dependent decarboxylation of 2-oxoglutarate and the subsequent addition of the resulting succinic semialdehyde-thiamine pyrophosphate anion to isochorismate to yield 2-succinyl-5-enolpyruvyl-6-hydroxy-3-cyclohexene-1-carboxylate (SEPHCHC). This chain is 2-succinyl-5-enolpyruvyl-6-hydroxy-3-cyclohexene-1-carboxylate synthase, found in Salmonella typhimurium (strain LT2 / SGSC1412 / ATCC 700720).